Here is a 328-residue protein sequence, read N- to C-terminus: Ribosomal RNA large subunit methyltransferase F (328 aa).

Positions 1 to 31 (MTDTRKPPRKKPQRPAKPAAPREKATLHPRN) are disordered.

It belongs to the methyltransferase superfamily. METTL16/RlmF family.

It localises to the cytoplasm. It catalyses the reaction adenosine(1618) in 23S rRNA + S-adenosyl-L-methionine = N(6)-methyladenosine(1618) in 23S rRNA + S-adenosyl-L-homocysteine + H(+). Functionally, specifically methylates the adenine in position 1618 of 23S rRNA. The protein is Ribosomal RNA large subunit methyltransferase F of Pseudomonas syringae pv. syringae (strain B728a).